Consider the following 134-residue polypeptide: Profilin-5 (134 aa).

Cysteines 13 and 118 form a disulfide. The Involved in PIP2 interaction signature appears at 84-100 (AVIRGKKGSGGITIKKT). Threonine 114 is modified (phosphothreonine).

This sequence belongs to the profilin family. Occurs in many kinds of cells as a complex with monomeric actin in a 1:1 ratio. Post-translationally, phosphorylated by MAP kinases.

Its subcellular location is the cytoplasm. It localises to the cytoskeleton. In terms of biological role, binds to actin and affects the structure of the cytoskeleton. At high concentrations, profilin prevents the polymerization of actin, whereas it enhances it at low concentrations. This Olea europaea (Common olive) protein is Profilin-5.